The following is a 201-amino-acid chain: Ependymin-related protein 2 (201 aa).

The N-terminal stretch at 1–21 (MILQVVLLLACLSGAIVSTGA) is a signal peptide. Residues Asn38 and Asn137 are each glycosylated (N-linked (GlcNAc...) asparagine). A Microbody targeting signal motif is present at residues 199–201 (CRA).

It belongs to the ependymin family. Component of the acid-soluble and acid-insoluble organic matrix of calcified shell layers (at protein level).

Its subcellular location is the secreted. The protein is Ependymin-related protein 2 of Haliotis asinina (Donkey's ear abalone).